The sequence spans 59 residues: UPF0434 protein SO_2800 (59 aa).

It belongs to the UPF0434 family.

The protein is UPF0434 protein SO_2800 of Shewanella oneidensis (strain ATCC 700550 / JCM 31522 / CIP 106686 / LMG 19005 / NCIMB 14063 / MR-1).